We begin with the raw amino-acid sequence, 437 residues long: GTPase Era, mitochondrial (437 aa).

Residues 1-20 (MAAPRRYCAGLVRALLGARQ) constitute a mitochondrion transit peptide. An Era-type G domain is found at 112–330 (RVLRVVLLGA…QYLLTQAQPG (219 aa)). Residues 120–127 (GAPNAGKS) are G1. GTP is bound at residue 120–127 (GAPNAGKS). Residues 146–150 (HTTRC) are G2. A G3 region spans residues 167–170 (DTPG). 167 to 171 (DTPGI) contributes to the GTP binding site. Serine 173 carries the phosphoserine modification. 236–239 (NKVD) provides a ligand contact to GTP. Residues 236–239 (NKVD) form a G4 region. Positions 270 to 292 (LRSRSSTHCPGPETEGPNAHSVR) are disordered. The segment at 308–310 (LSA) is G5. Positions 360 to 437 (LPEEVPYGVQ…LIRLSVKLLK (78 aa)) constitute a KH type-2 domain.

This sequence belongs to the TRAFAC class TrmE-Era-EngA-EngB-Septin-like GTPase superfamily. Era GTPase family.

It is found in the mitochondrion matrix. The protein localises to the mitochondrion inner membrane. Functionally, probable GTPase that plays a role in the mitochondrial ribosomal small subunit assembly. Specifically binds the 12S mitochondrial rRNA (12S mt-rRNA) to a 33 nucleotide section delineating the 3' terminal stem-loop region. May act as a chaperone that protects the 12S mt-rRNA on the 28S mitoribosomal subunit during ribosomal small subunit assembly. The protein is GTPase Era, mitochondrial (Eral1) of Mus musculus (Mouse).